Consider the following 163-residue polypeptide: Urease accessory protein UreE (163 aa).

Positions P130–H163 are disordered. The span at H146–H163 shows a compositional bias: basic and acidic residues.

It belongs to the UreE family.

The protein resides in the cytoplasm. Involved in urease metallocenter assembly. Binds nickel. Probably functions as a nickel donor during metallocenter assembly. The sequence is that of Urease accessory protein UreE from Alkalilimnicola ehrlichii (strain ATCC BAA-1101 / DSM 17681 / MLHE-1).